The chain runs to 328 residues: MAKDIRVLLYYKYVPIENAEKFAADHLAFCKSIGLKGRILVADEGINGTVSGDYETTQKYMDYVHSLPGMEDLWFKIDEENEQAFKKMFVRYKKEIVHLGLEDNDFDNDINPLETTGAYLSPKEFKEALLDEDTVVLDTRNDYEYDLGHFRGAIRPDIRNFRELPQWVRDNKEKFMDKRVIVYCTGGVRCEKFSGWMVREGYKDVGQLHGGIATYGKDPEVQGELWDGKMYVFDERISVDINHVNPVVIGKDWFDGTPCERYVNCGNPECNRRILTSEENEDKYLRGCSHECRVHPRNRYVAENGLSQAEVVERLAAIGESLETLVAQ.

In terms of domain architecture, Rhodanese spans 130-224 (LDEDTVVLDT…YGKDPEVQGE (95 aa)). The active-site Cysteine persulfide intermediate is Cys184.

This sequence belongs to the TrhO family.

It carries out the reaction uridine(34) in tRNA + AH2 + O2 = 5-hydroxyuridine(34) in tRNA + A + H2O. Its function is as follows. Catalyzes oxygen-dependent 5-hydroxyuridine (ho5U) modification at position 34 in tRNAs. In Streptococcus sanguinis (strain SK36), this protein is tRNA uridine(34) hydroxylase.